Consider the following 209-residue polypeptide: MIVPIFFLFSLLFSSSHGAIQDFCVADYSAPQGPAGYSCKNPAKVTVDNFVYSGLGITGNTTNLIKAAVTTAFDNQFPGVNGLGISLARPDLAPGGVIPFHTHPGASEIIIVIEGSLCAAFVSSDNKVYLKSLKKGDTMIFPSGLLHFQLNAGKNNALFFVAFNSPNPGLQLVDYALFGNDLATELVAAASFLDPAEIKRLKAVLGGSG.

Positions 1 to 18 (MIVPIFFLFSLLFSSSHG) are cleaved as a signal peptide. An intrachain disulfide couples cysteine 24 to cysteine 39. Positions 53–199 (SGLGITGNTT…ASFLDPAEIK (147 aa)) constitute a Cupin type-1 domain. Residue asparagine 60 is glycosylated (N-linked (GlcNAc...) asparagine). The Mn(2+) site is built by histidine 101, histidine 103, glutamate 108, and histidine 147.

It is found in the secreted. Its subcellular location is the extracellular space. It localises to the apoplast. Functionally, has antibacterial activity against B.subtilis (MIC=5 ug), B.cereus (MIC=50 ug), A.hydrophila (MIC=2.5 ug), S.marcescens(MIC=10 ug), S.enterica (MIC=10 ug), P.entomophila (MIC=2.5 ug) and P.rhodesiae (MIC=10 ug). Has antifungal activity against F.solani KACC 40384 and F.oxysporum KACC 40032. Probably has no oxalate oxidase activity even if the active site is conserved. In Morus alba (White mulberry), this protein is Germin-like protein.